The primary structure comprises 162 residues: NADH-quinone oxidoreductase subunit I (162 aa).

4Fe-4S ferredoxin-type domains follow at residues 53–83 and 93–122; these read LRRY…IDSA and TRYD…ETHI. Residues cysteine 63, cysteine 66, cysteine 69, cysteine 73, cysteine 102, cysteine 105, cysteine 108, and cysteine 112 each contribute to the [4Fe-4S] cluster site.

Belongs to the complex I 23 kDa subunit family. As to quaternary structure, NDH-1 is composed of 14 different subunits. Subunits NuoA, H, J, K, L, M, N constitute the membrane sector of the complex. It depends on [4Fe-4S] cluster as a cofactor.

It localises to the cell inner membrane. The catalysed reaction is a quinone + NADH + 5 H(+)(in) = a quinol + NAD(+) + 4 H(+)(out). NDH-1 shuttles electrons from NADH, via FMN and iron-sulfur (Fe-S) centers, to quinones in the respiratory chain. The immediate electron acceptor for the enzyme in this species is believed to be ubiquinone. Couples the redox reaction to proton translocation (for every two electrons transferred, four hydrogen ions are translocated across the cytoplasmic membrane), and thus conserves the redox energy in a proton gradient. The polypeptide is NADH-quinone oxidoreductase subunit I (Xanthomonas oryzae pv. oryzae (strain MAFF 311018)).